The following is a 417-amino-acid chain: MSQQLAKEISQRAAKAARAVATLSETDKNAVLQKMADAIRARQDKIIEVNKKDLATGKEKGLSDAMMDRLELTPERVEGMASAIEEIIALKDPVGDSYVLDERPNGMKIEKMRIPLGVICMIYEARPNVTADAGALCFKSGNAVILRCGREAIESSKAIAEALHEALEASNLPKDVITVVPTPDRELMTELLQQKDYIDLVIPRGGEGLIHFVSDTSKIPVIQHYKGVCHLYVDKDADLDKALAILLNGKTQRTGVCNALEGLLVHQDVADKFLPMAAKALAEKDVTIHADKRSVSYFDGADEIADDAFGEEYLALEIAVRTVDNYEGAIEHIQEFGSGHTEVIITENDETAKRFIREVDSAVTMANVSSRFSDGGQLGLGAEIGISTSKLHAYGPMGLEALTTEKFVVTGNGQVRD.

It belongs to the gamma-glutamyl phosphate reductase family.

The protein resides in the cytoplasm. It carries out the reaction L-glutamate 5-semialdehyde + phosphate + NADP(+) = L-glutamyl 5-phosphate + NADPH + H(+). It functions in the pathway amino-acid biosynthesis; L-proline biosynthesis; L-glutamate 5-semialdehyde from L-glutamate: step 2/2. Its function is as follows. Catalyzes the NADPH-dependent reduction of L-glutamate 5-phosphate into L-glutamate 5-semialdehyde and phosphate. The product spontaneously undergoes cyclization to form 1-pyrroline-5-carboxylate. The chain is Gamma-glutamyl phosphate reductase from Idiomarina loihiensis (strain ATCC BAA-735 / DSM 15497 / L2-TR).